A 176-amino-acid polypeptide reads, in one-letter code: MLTTNTLAVLLLLFLSLCSGQSPPAPEPIAADGPSSPVNCLVSMLNVSDCFSYVQVGSNEIKPEAACCPELAGMVQSSPECVCNLYGGGASPRFGVKLDKQRAEQLSTICGVKAPSPSLCSVLGFPTISPAGSEDSSSGSEGSDKDKKNGAMTTKYCGVALNSLALLLLFTFLSLS.

The first 20 residues, M1–G20, serve as a signal peptide directing secretion. 4 cysteine pairs are disulfide-bonded: C40–C83, C50–C67, C68–C110, and C81–C120. An N-linked (GlcNAc...) asparagine glycan is attached at N46. N149 carries the GPI-anchor amidated asparagine lipid modification. A propeptide spans G150–S176 (removed in mature form).

This sequence belongs to the plant LTP family. As to expression, preferentially expressed in the endodermis of hypocotyls and roots of seedlings, and in petals and anthers of inflorescences. May also be expressed in siliques, carpels and pedicels.

Its subcellular location is the cell membrane. Functionally, probable lipid transfer protein. In Arabidopsis thaliana (Mouse-ear cress), this protein is Non-specific lipid transfer protein GPI-anchored 12.